The primary structure comprises 546 residues: T-complex protein 1 subunit zeta (546 aa).

Position 2 is an N-acetylserine (S2). Residue S249 is modified to Phosphoserine.

This sequence belongs to the TCP-1 chaperonin family. Heterooligomeric complex of about 850 to 900 kDa that forms two stacked rings, 12 to 16 nm in diameter.

It localises to the cytoplasm. Its function is as follows. Molecular chaperone; assists the folding of proteins upon ATP hydrolysis. Known to play a role, in vitro, in the folding of actin and tubulin. In yeast may play a role in mitotic spindle formation. The chain is T-complex protein 1 subunit zeta (CCT6) from Saccharomyces cerevisiae (strain ATCC 204508 / S288c) (Baker's yeast).